Reading from the N-terminus, the 603-residue chain is Mitochondrial distribution and morphology protein 34 (603 aa).

Positions 1–205 (MAFNFNWSPL…SPEYQEIETE (205 aa)) constitute an SMP-LTD domain. Positions 320 to 332 (KSGASSVASGSTG) are enriched in low complexity. Disordered stretches follow at residues 320–511 (KSGA…PLLR) and 558–603 (IARK…AYVA). Residues 333–351 (NETLSSRPTLASSYSTSAG) show a composition bias toward polar residues. Positions 371–380 (VVDLRRKDGA) are enriched in basic and acidic residues. Positions 383-403 (GVSTEANTPLPSTQVSDTSSV) are enriched in polar residues. The segment covering 452-463 (PLLAPAPLIPNA) has biased composition (low complexity). Residues 500–509 (RQAQQSTSPL) show a composition bias toward polar residues. The span at 558–570 (IARKVQEEKDKSS) shows a compositional bias: basic and acidic residues.

This sequence belongs to the MDM34 family. Component of the ER-mitochondria encounter structure (ERMES) or MDM complex, composed of mmm1, mdm10, mdm12 and mdm34.

It localises to the mitochondrion outer membrane. In terms of biological role, component of the ERMES/MDM complex, which serves as a molecular tether to connect the endoplasmic reticulum (ER) and mitochondria. Components of this complex are involved in the control of mitochondrial shape and protein biogenesis, and function in nonvesicular lipid trafficking between the ER and mitochondria. Mdm34 is required for the interaction of the ER-resident membrane protein mmm1 and the outer mitochondrial membrane-resident beta-barrel protein mdm10. In Pyrenophora tritici-repentis (strain Pt-1C-BFP) (Wheat tan spot fungus), this protein is Mitochondrial distribution and morphology protein 34.